The following is a 274-amino-acid chain: Diaminopimelate epimerase (274 aa).

Substrate contacts are provided by Asn11, Gln44, and Asn64. Cys73 (proton donor) is an active-site residue. Substrate contacts are provided by residues 74–75 (GN), Asn157, Asn190, and 208–209 (ER). Cys217 serves as the catalytic Proton acceptor. 218–219 (GS) is a substrate binding site.

Belongs to the diaminopimelate epimerase family. As to quaternary structure, homodimer.

The protein resides in the cytoplasm. The catalysed reaction is (2S,6S)-2,6-diaminopimelate = meso-2,6-diaminopimelate. It functions in the pathway amino-acid biosynthesis; L-lysine biosynthesis via DAP pathway; DL-2,6-diaminopimelate from LL-2,6-diaminopimelate: step 1/1. Functionally, catalyzes the stereoinversion of LL-2,6-diaminopimelate (L,L-DAP) to meso-diaminopimelate (meso-DAP), a precursor of L-lysine and an essential component of the bacterial peptidoglycan. The chain is Diaminopimelate epimerase from Haemophilus ducreyi (strain 35000HP / ATCC 700724).